Reading from the N-terminus, the 862-residue chain is Semaphorin-4D (862 aa).

Positions 1–21 (MRMCTPIRGLLMALAVMFGTA) are cleaved as a signal peptide. Residues 22–500 (MAFAPIPRIT…SNSGVVQAPL (479 aa)) form the Sema domain. The Extracellular portion of the chain corresponds to 22-734 (MAFAPIPRIT…TMYLKSSDNR (713 aa)). N-linked (GlcNAc...) asparagine glycosylation is found at N49 and N77. Cystine bridges form between C97–C108 and C126–C135. N139 and N191 each carry an N-linked (GlcNAc...) asparagine glycan. 2 cysteine pairs are disulfide-bonded: C257–C370 and C281–C326. Residues N329, N379, and N419 are each glycosylated (N-linked (GlcNAc...) asparagine). The PSI domain occupies 502–551 (FCGKHGTCEDCVLARDPYCAWSPPTATCVALHQTESPSRGLIQEMSGDAS). 4 disulfide bridges follow: C503–C520, C509–C553, C512–C529, and C576–C624. The Ig-like C2-type domain maps to 554–636 (PDKSKGSYRQ…EERVKNKTVF (83 aa)). N-linked (GlcNAc...) asparagine glycans are attached at residues N613 and N632. A helical transmembrane segment spans residues 735 to 755 (LLMSLFLFFFVLFLCLFFYNC). Topologically, residues 756 to 862 (YKGYLPRQCL…KFADSDADGD (107 aa)) are cytoplasmic. A disordered region spans residues 794–837 (VEPGSFSQQNGEHPKPALDTGYETEQDTITSKVPTDREDSQRID). Over residues 827-837 (PTDREDSQRID) the composition is skewed to basic and acidic residues. Position 833 is a phosphoserine (S833).

Belongs to the semaphorin family. In terms of assembly, homodimer. Interacts with PLXNB2. Interacts with PLXNB1. In terms of tissue distribution, strongly expressed in skeletal muscle, peripheral blood lymphocytes, spleen, and thymus and also expressed at lower levels in testes, brain, kidney, small intestine, prostate, heart, placenta, lung and pancreas, but not in colon and liver.

The protein resides in the cell membrane. Its function is as follows. Cell surface receptor for PLXNB1 and PLXNB2 that plays an important role in cell-cell signaling. Regulates GABAergic synapse development. Promotes the development of inhibitory synapses in a PLXNB1-dependent manner. Modulates the complexity and arborization of developing neurites in hippocampal neurons by activating PLXNB1 and interaction with PLXNB1 mediates activation of RHOA. Promotes the migration of cerebellar granule cells. Plays a role in the immune system; induces B-cells to aggregate and improves their viability (in vitro). Induces endothelial cell migration through the activation of PTK2B/PYK2, SRC, and the phosphatidylinositol 3-kinase-AKT pathway. The protein is Semaphorin-4D (SEMA4D) of Homo sapiens (Human).